A 619-amino-acid polypeptide reads, in one-letter code: MEFPGGNDNYLTITGPSHPFLSGAETFHTPSLGDEEFEIPPISLDSDPSLAVSDVVGHFDDLADPSSSQDGSFSAQYGVQTLDMPVGMTHGLMEQGGGLLSGGLTMDLDHSIGTQYSANPPVTIDVPMTDMTSGLMGHSQLTTIDQSELSSQLGLSLGGGTILPPAQSPEDRLSTTPSPTSSLHEDGVEEFRRQPPSQKTVVVEAGKKQKAPKKRKKKDPNEPQKPVSAYALFFRDTQAAIKGQNPNATFGEVSKIVASMWDSLGEEQKQVYKRKTEAAKKEYLKALAAYKDNQECQATVETVDMDPAPPSQTPSPPPVAAADPASPAPASTEPPALSPSIVVNSTLSSYVANQASSGAGGQPNITKLIITKQMLPSSITMSQGGMVTVIPATVVTSRGLQLGQTSTATIQPSQQAQIVTRSVLQAAAAAAASMQLPPPRLQPPPLQQMPQPPTQQQVTILQQPPPLQAMQQPPPQKFRINLQQQPPPLQVKIVPPPTLKMQTTLVPPPVESSPEQPVNNSPETHTVEETTPETICEMITDVVPEVESPSQMDVELVSGSPMTLSPQPRCVRSGCENPPVVSKDWDNEYCSNECVVKHCRDVFLAWVASRNSNTVVFVK.

2 disordered regions span residues 153–227 (LGLS…QKPV) and 304–337 (DMDPAPPSQTPSPPPVAAADPASPAPASTEPPAL). T176 carries the phosphothreonine modification. Phosphoserine occurs at positions 178, 181, and 182. Positions 183-193 (LHEDGVEEFRR) are enriched in basic and acidic residues. Over residues 208 to 218 (KQKAPKKRKKK) the composition is skewed to basic residues. The Nuclear localization signal motif lies at 213–218 (KKRKKK). Positions 223 to 291 (PQKPVSAYAL…EYLKALAAYK (69 aa)) form a DNA-binding region, HMG box. The span at 307–319 (PAPPSQTPSPPPV) shows a compositional bias: pro residues. The residue at position 313 (T313) is a Phosphothreonine. The residue at position 315 (S315) is a Phosphoserine. A compositionally biased stretch (low complexity) spans 320–337 (AAADPASPAPASTEPPAL). R479 bears the Asymmetric dimethylarginine mark. The tract at residues 507–529 (PPPVESSPEQPVNNSPETHTVEE) is disordered. Residues 512 to 524 (SSPEQPVNNSPET) are compositionally biased toward low complexity. A phosphoserine mark is found at S548, S550, S558, S560, and S565.

In terms of assembly, component of the PNUTS-PP1 phosphatase complex, composed of PPP1R10/PNUTS, TOX4, WDR82 and PPP1CA or PPP1CB or PPP1CC. Interacts with PPP1R10/PNUTS. Interacts with FOXO1 and CREB1 (increased by cAMP); FOXO1 and CREB1 are required for full induction of TOX4-dependent activity and the interactions are inhibited by insulin.

Its subcellular location is the nucleus. It localises to the chromosome. Its activity is regulated as follows. In liver, recruited to target gene promoters following treatment with dexamethasone and cAMP. Binding is decreased in presence of insulin. In terms of biological role, transcription factor that modulates cell fate reprogramming from the somatic state to the pluripotent and neuronal fate. In liver, controls the expression of hormone-regulated gluconeogenic genes such as G6PC1 and PCK1. This regulation is independent of the insulin receptor activation. Also acts as a regulatory component of protein phosphatase 1 (PP1) complexes. Component of the PNUTS-PP1 protein phosphatase complex, a PP1 complex that regulates RNA polymerase II transcription pause-release. PNUTS-PP1 also plays a role in the control of chromatin structure and cell cycle progression during the transition from mitosis into interphase. The chain is TOX high mobility group box family member 4 (TOX4) from Bos taurus (Bovine).